A 152-amino-acid chain; its full sequence is Small ribosomal subunit protein uS13 (152 aa).

This sequence belongs to the universal ribosomal protein uS13 family. Part of the 30S ribosomal subunit. Forms a loose heterodimer with protein S19. Forms two bridges to the 50S subunit in the 70S ribosome.

Its function is as follows. Located at the top of the head of the 30S subunit, it contacts several helices of the 16S rRNA. In the 70S ribosome it contacts the 23S rRNA (bridge B1a) and protein L5 of the 50S subunit (bridge B1b), connecting the 2 subunits; these bridges are implicated in subunit movement. In Pyrobaculum aerophilum (strain ATCC 51768 / DSM 7523 / JCM 9630 / CIP 104966 / NBRC 100827 / IM2), this protein is Small ribosomal subunit protein uS13.